The sequence spans 301 residues: Ornithine carbamoyltransferase (301 aa).

Carbamoyl phosphate is bound by residues 47-50 (STRT), Gln74, Arg98, and 125-128 (HPMQ). L-ornithine-binding positions include Asn156, Asp220, and 224–225 (SM). Residues 260-261 (CL) and Arg288 contribute to the carbamoyl phosphate site.

This sequence belongs to the aspartate/ornithine carbamoyltransferase superfamily. OTCase family.

The protein resides in the cytoplasm. It carries out the reaction carbamoyl phosphate + L-ornithine = L-citrulline + phosphate + H(+). Its pathway is amino-acid biosynthesis; L-arginine biosynthesis; L-arginine from L-ornithine and carbamoyl phosphate: step 1/3. Reversibly catalyzes the transfer of the carbamoyl group from carbamoyl phosphate (CP) to the N(epsilon) atom of ornithine (ORN) to produce L-citrulline. The chain is Ornithine carbamoyltransferase from Picrophilus torridus (strain ATCC 700027 / DSM 9790 / JCM 10055 / NBRC 100828 / KAW 2/3).